The chain runs to 237 residues: B3 domain-containing protein Os06g0194400 (237 aa).

Disordered regions lie at residues 1-23 (MIEA…RQVE) and 38-82 (SAAV…LPEK). The TF-B3 DNA-binding region spans 139–230 (FVKPMLQSHV…KFKVYIIRAS (92 aa)).

The protein resides in the nucleus. The chain is B3 domain-containing protein Os06g0194400 from Oryza sativa subsp. japonica (Rice).